We begin with the raw amino-acid sequence, 378 residues long: Anhydro-N-acetylmuramic acid kinase (378 aa).

ATP is bound at residue 9 to 16; the sequence is GTSADGID.

The protein belongs to the anhydro-N-acetylmuramic acid kinase family.

The catalysed reaction is 1,6-anhydro-N-acetyl-beta-muramate + ATP + H2O = N-acetyl-D-muramate 6-phosphate + ADP + H(+). The protein operates within amino-sugar metabolism; 1,6-anhydro-N-acetylmuramate degradation. It functions in the pathway cell wall biogenesis; peptidoglycan recycling. In terms of biological role, catalyzes the specific phosphorylation of 1,6-anhydro-N-acetylmuramic acid (anhMurNAc) with the simultaneous cleavage of the 1,6-anhydro ring, generating MurNAc-6-P. Is required for the utilization of anhMurNAc either imported from the medium or derived from its own cell wall murein, and thus plays a role in cell wall recycling. In Prochlorococcus marinus (strain NATL1A), this protein is Anhydro-N-acetylmuramic acid kinase.